The chain runs to 261 residues: MLTKRIIPCLDVTDGRVKKGVNFVNLVDVGDPVAIARRYQEQGADELVFLDITATNQGRQATVDMVAAVSRQVFMPLTVGGGIRSVEDMRALLLAGADKVSLNSSAVADPDLISAGARLFGNQCFVTAIDVKTDPATGQKMVYTHGGTKPTGLEALAWAKQVVSLGSGELLVTSMDKDGTQDGYDTAFYKELTAAVDVPVIASGGAGKIDDFADVFLNSGVTGALAASVFHFQQLTIAQVKEDLIKKGVPVRWNQTLQRGS.

Residues D11 and D130 contribute to the active site.

It belongs to the HisA/HisF family. As to quaternary structure, heterodimer of HisH and HisF.

The protein resides in the cytoplasm. The catalysed reaction is 5-[(5-phospho-1-deoxy-D-ribulos-1-ylimino)methylamino]-1-(5-phospho-beta-D-ribosyl)imidazole-4-carboxamide + L-glutamine = D-erythro-1-(imidazol-4-yl)glycerol 3-phosphate + 5-amino-1-(5-phospho-beta-D-ribosyl)imidazole-4-carboxamide + L-glutamate + H(+). It participates in amino-acid biosynthesis; L-histidine biosynthesis; L-histidine from 5-phospho-alpha-D-ribose 1-diphosphate: step 5/9. Its function is as follows. IGPS catalyzes the conversion of PRFAR and glutamine to IGP, AICAR and glutamate. The HisF subunit catalyzes the cyclization activity that produces IGP and AICAR from PRFAR using the ammonia provided by the HisH subunit. This is Imidazole glycerol phosphate synthase subunit HisF from Limosilactobacillus fermentum (strain NBRC 3956 / LMG 18251) (Lactobacillus fermentum).